The chain runs to 164 residues: MASKQERLTDLIVPVVESLGCELWGLEYLTQGRYTTLRIFIDGPQGVSLDDCERVSRQISAVLDVEDPIDGEYTLEVSSPGLDRPLYTEAQYARYVGETVNLRLRIAVEGRRRFKGVISAIEEGALLLQFDNQTVRLPIETIDKGNLVPRYDDILREHAAGLDE.

It belongs to the RimP family.

Its subcellular location is the cytoplasm. Required for maturation of 30S ribosomal subunits. In Cellvibrio japonicus (strain Ueda107) (Pseudomonas fluorescens subsp. cellulosa), this protein is Ribosome maturation factor RimP.